We begin with the raw amino-acid sequence, 422 residues long: PHAF1 protein T01G9.2 (422 aa).

Belongs to the PHAF1 family.

The protein resides in the cytoplasm. It localises to the preautophagosomal structure. May play a regulatory role in autophagic activity. The protein is PHAF1 protein T01G9.2 of Caenorhabditis elegans.